A 948-amino-acid chain; its full sequence is MKEPSIVVKGARAHNLKDIDIELPKNKLIVMTGLSGSGKSSLAFDTIYAEGQRRYVESLSAYARQFLGQMDKPDVDTIEGLSPAISIDQKTTSKNPRSTVATVTEIYDYIRLLYARVGKPYCPNHNIEIESQTVQQMVDRIMELEARTKIQLLAPVIAHRKGSHEKLIEDIGKKGYVRLRIDGEIVDVNDVPTLDKNKNHTIEVVVDRLVVKDGIETRLADSIETALELSEGQLTVDVIDGEDLKFSESHACPICGFSIGELEPRMFSFNSPFGACPTCDGLGQKLTVDVDLVVPDKDKTLNEGAIEPWIPTSSDFYPTLLKRVCEVYKINMDKPFKKLTERQRDILLYGSGDKEIEFTFTQRQGGTRKRTMVFEGVVPNISRRFHESPSEYTREMMSKYMTELPCETCHGKRLSREALSVYVGGLNIGEVVEYSISQALNYYKNIDLSEQDQAIANQILKEIISRLTFLNNVGLEYLTLNRASGTLSGGEAQRIRLATQIGSRLTGVLYVLDEPSIGLHQRDNDRLINTLKEMRDLGNTLIVVEHDDDTMRAADYLVDIGPGAGEHGGQIVSSGTPQKVMKDKKSLTGQYLSGKKRIDVPEYRRPASDRKISIRGARSNNLKGIDVDIPLSIMTVVTGVSGSGKSSLVNEVLYKSLAQKINKSKVKPGLYDKIEGIDQLDKIIDIDQSPIGRTPRSNPATYTGVFDDIRDVFAQTNEAKIRGYQKGRFSFNVKGGRCEACKGDGIIKIEMHFLPDVYVPCEVCDGKRYNRETLEVTYKGKNIADILEMTVEEATQFFENIPKIKRKLQTLVDVGLGYVTLGQQATTLSGGEAQRVKLASELHKRSTGKSIYILDELTTGLHVDDISRLLKVLNRLVENGDTVVIIEHNLDVIKTADYIIDLGPEGGSGGGTIVATGTPEDIAQTKSSYTGKYLKEVLERDKQNTEDK.

G33–S40 is an ATP binding site. The C4-type zinc-finger motif lies at C252–C279. ABC transporter domains lie at W309–L587 and A607–K935. G639 to S646 contributes to the ATP binding site. The C4-type zinc finger occupies C738 to C764.

Belongs to the ABC transporter superfamily. UvrA family. As to quaternary structure, forms a heterotetramer with UvrB during the search for lesions.

It localises to the cytoplasm. Functionally, the UvrABC repair system catalyzes the recognition and processing of DNA lesions. UvrA is an ATPase and a DNA-binding protein. A damage recognition complex composed of 2 UvrA and 2 UvrB subunits scans DNA for abnormalities. When the presence of a lesion has been verified by UvrB, the UvrA molecules dissociate. The chain is UvrABC system protein A from Staphylococcus aureus (strain N315).